The following is a 764-amino-acid chain: uncharacterized protein (764 aa).

The Lumenal portion of the chain corresponds to methionine 1–threonine 646. The interval leucine 22–valine 173 is disordered. N-linked (GlcNAc...) asparagine glycosylation is present at asparagine 23. Composition is skewed to polar residues over residues threonine 25–glycine 41 and serine 61–serine 82. At serine 80 the chain carries Phosphoserine. Over residues glutamate 98 to serine 113 the composition is skewed to acidic residues. A glycan (N-linked (GlcNAc...) asparagine) is linked at asparagine 118. Residues asparagine 118 to alanine 145 show a composition bias toward basic and acidic residues. Residues asparagine 158–valine 173 show a composition bias toward polar residues. One can recognise a GRAM domain in the interval arginine 197–serine 264. N-linked (GlcNAc...) asparagine glycosylation is found at asparagine 240 and asparagine 330. A disordered region spans residues alanine 320–glutamate 406. The span at serine 321–asparagine 330 shows a compositional bias: low complexity. A compositionally biased stretch (polar residues) spans glutamine 331 to glycine 340. Over residues alanine 352–glutamate 371 the composition is skewed to acidic residues. N-linked (GlcNAc...) asparagine glycosylation is found at asparagine 364 and asparagine 376. Residues histidine 389–asparagine 399 are compositionally biased toward polar residues. Positions leucine 432–lysine 598 constitute a VASt domain. Residues asparagine 442 and asparagine 554 are each glycosylated (N-linked (GlcNAc...) asparagine). The span at lysine 598–lysine 613 shows a compositional bias: basic residues. The disordered stretch occupies residues lysine 598–aspartate 626. Asparagine 627 carries N-linked (GlcNAc...) asparagine glycosylation. A helical membrane pass occupies residues isoleucine 647–valine 667. The Cytoplasmic portion of the chain corresponds to leucine 668–isoleucine 764.

The protein belongs to the YSP2 family.

The protein localises to the membrane. This is an uncharacterized protein from Schizosaccharomyces pombe (strain 972 / ATCC 24843) (Fission yeast).